A 641-amino-acid chain; its full sequence is Fructose-1,6-bisphosphatase class 3 (641 aa).

It belongs to the FBPase class 3 family. The cofactor is Mn(2+).

The catalysed reaction is beta-D-fructose 1,6-bisphosphate + H2O = beta-D-fructose 6-phosphate + phosphate. It functions in the pathway carbohydrate biosynthesis; gluconeogenesis. This chain is Fructose-1,6-bisphosphatase class 3, found in Latilactobacillus sakei subsp. sakei (strain 23K) (Lactobacillus sakei subsp. sakei).